A 173-amino-acid polypeptide reads, in one-letter code: Alpha-crystallin A chain (173 aa).

M1 is subject to N-acetylmethionine. The sHSP domain occupies 52-162 (LFRSVLESGI…SHSERPIPVS (111 aa)). Positions 100, 102, 107, and 154 each coordinate Zn(2+). The disordered stretch occupies residues 142-173 (SGPKVPSNMDPSHSERPIPVSREEKPTSAPSS). Positions 153–167 (SHSERPIPVSREEKP) are enriched in basic and acidic residues. Residue S162 is glycosylated (O-linked (GlcNAc) serine).

It belongs to the small heat shock protein (HSP20) family. As to quaternary structure, heteropolymer composed of three CRYAA and one CRYAB subunits. Inter-subunit bridging via zinc ions enhances stability, which is crucial as there is no protein turn over in the lens. Can also form homodimers and homotetramers (dimers of dimers) which serve as the building blocks of homooligomers. Within homooligomers, the zinc-binding motif is created from residues of 3 different molecules. His-100 and Glu-102 from one molecule are ligands of the zinc ion, and His-107 and His-154 residues from additional molecules complete the site with tetrahedral coordination geometry.

The protein resides in the cytoplasm. It localises to the nucleus. Its function is as follows. Contributes to the transparency and refractive index of the lens. May act as a chaperone, preventing aggregation of various proteins under a wide range of stress conditions. This is Alpha-crystallin A chain (CRYAA) from Gallus gallus (Chicken).